Reading from the N-terminus, the 269-residue chain is Formamidopyrimidine-DNA glycosylase (269 aa).

Pro-2 acts as the Schiff-base intermediate with DNA in catalysis. The Proton donor role is filled by Glu-3. Lys-57 acts as the Proton donor; for beta-elimination activity in catalysis. His-90, Arg-109, and Lys-150 together coordinate DNA. The segment at 235–269 (QVYGRKGEPCRVCGTPIVATKHAQRATFYCRHCQK) adopts an FPG-type zinc-finger fold. The Proton donor; for delta-elimination activity role is filled by Arg-259.

Belongs to the FPG family. As to quaternary structure, monomer. Zn(2+) serves as cofactor.

The catalysed reaction is Hydrolysis of DNA containing ring-opened 7-methylguanine residues, releasing 2,6-diamino-4-hydroxy-5-(N-methyl)formamidopyrimidine.. It catalyses the reaction 2'-deoxyribonucleotide-(2'-deoxyribose 5'-phosphate)-2'-deoxyribonucleotide-DNA = a 3'-end 2'-deoxyribonucleotide-(2,3-dehydro-2,3-deoxyribose 5'-phosphate)-DNA + a 5'-end 5'-phospho-2'-deoxyribonucleoside-DNA + H(+). In terms of biological role, involved in base excision repair of DNA damaged by oxidation or by mutagenic agents. Acts as a DNA glycosylase that recognizes and removes damaged bases. Has a preference for oxidized purines, such as 7,8-dihydro-8-oxoguanine (8-oxoG). Has AP (apurinic/apyrimidinic) lyase activity and introduces nicks in the DNA strand. Cleaves the DNA backbone by beta-delta elimination to generate a single-strand break at the site of the removed base with both 3'- and 5'-phosphates. The protein is Formamidopyrimidine-DNA glycosylase of Salmonella dublin (strain CT_02021853).